Here is a 333-residue protein sequence, read N- to C-terminus: Autoinducer 2 import system permease protein LsrC (333 aa).

A run of 9 helical transmembrane segments spans residues 14–34, 39–59, 70–90, 93–113, 115–135, 157–177, 206–226, 252–272, and 284–304; these read LIAILCLFGLLSVIDHQYFSL, LVFSSAQILILLAMGATLVML, IAGLCAVIMGMSLNAGFSLSV, LLTLLLGMCAGFFNGALVTWL, IPAIVTTLGTLGLYRGLMLLL, LNISPIGWLLMILILAMAWIL, IQIIAFSVNGVMAALAGIVFA, GISLLGGTGTVIGAILGAFFL, and LPAWWNDFIAGFVLLAVLIFD.

Belongs to the binding-protein-dependent transport system permease family. AraH/RbsC subfamily. The complex is composed of two ATP-binding proteins (LsrA), two transmembrane proteins (LsrC and LsrD) and a solute-binding protein (LsrB).

Its subcellular location is the cell inner membrane. Part of the ABC transporter complex LsrABCD involved in autoinducer 2 (AI-2) import. Probably responsible for the translocation of the substrate across the membrane. This Photorhabdus laumondii subsp. laumondii (strain DSM 15139 / CIP 105565 / TT01) (Photorhabdus luminescens subsp. laumondii) protein is Autoinducer 2 import system permease protein LsrC (lsrC).